A 1039-amino-acid polypeptide reads, in one-letter code: FHIP family protein GG24907 (1039 aa).

A phosphoserine mark is found at Ser498 and Ser805. Disordered stretches follow at residues 831–877 (ATPT…SASS), 904–945 (GISQ…SNSS), and 957–984 (SNTT…SEPA). Polar residues-rich tracts occupy residues 855-877 (TSMF…SASS) and 904-924 (GISQ…TQPQ). The span at 925–945 (AGASRTGATATSAAASGSNSS) shows a compositional bias: low complexity. Residues 957–966 (SNTTTHSAST) are compositionally biased toward polar residues.

Belongs to the FHIP family.

The protein is FHIP family protein GG24907 of Drosophila erecta (Fruit fly).